A 383-amino-acid polypeptide reads, in one-letter code: uncharacterized protein (383 aa).

Cys12, Cys18, Cys21, and Cys88 together coordinate [4Fe-4S] cluster. S-adenosyl-L-methionine contacts are provided by Gln219, Phe246, Glu267, and Asp314. The Nucleophile role is filled by Cys341.

The protein belongs to the class I-like SAM-binding methyltransferase superfamily. RNA M5U methyltransferase family.

This is an uncharacterized protein from Protochlamydia amoebophila (strain UWE25).